A 2191-amino-acid polypeptide reads, in one-letter code: FRAS1-related extracellular matrix protein 1 (2191 aa).

The signal sequence occupies residues 1-29 (MHSPGCTGPKAQWFLLLQLLLLHLDRVSA). Residues 205–207 (RGD) carry the Cell attachment site motif. CSPG repeat units follow at residues 300-394 (VPRA…MELE), 419-506 (APRV…FRIF), and 527-621 (PPFL…FVLW). N341 is a glycosylation site (N-linked (GlcNAc...) asparagine). N566 and N628 each carry an N-linked (GlcNAc...) asparagine glycan. 3 CSPG repeats span residues 648–779 (KEAP…VSVS), 801–892 (QVPE…LEVT), and 912–1007 (EPPI…LVVS). N1039 carries N-linked (GlcNAc...) asparagine glycosylation. CSPG repeat units follow at residues 1049-1151 (PPSI…VYAT), 1172-1273 (EAPD…IQLS), 1294-1391 (TPTL…FYLW), 1412-1504 (GDIV…FTIS), 1525-1614 (LPVL…FLAT), and 1650-1742 (HLHS…FQAM). Residue N1180 is glycosylated (N-linked (GlcNAc...) asparagine). N1584 is a glycosylation site (N-linked (GlcNAc...) asparagine). The region spanning 1749–1848 (ATPQSLDLRW…DDEVFEVILN (100 aa)) is the Calx-beta domain. The tract at residues 1874–1921 (HPSNSFNQSKHSTWGKGPWHPLPSGSSSLTTSGSPLLERPPPSFTSGD) is disordered. Over residues 1875 to 1885 (PSNSFNQSKHS) the composition is skewed to polar residues. Positions 1895–1910 (LPSGSSSLTTSGSPLL) are enriched in low complexity. Residues 2072-2186 (HSGYCHILVT…CSKGKAHNFV (115 aa)) form the C-type lectin domain. A disulfide bridge connects residues C2163 and C2177.

It belongs to the FRAS1 family. As to quaternary structure, interacts with FREM2. Expressed in epidermis and hair follicles. Expressed in many developing epidermal appendages, including the whisker and sensory vibrissae, cranial and trunk hair follicles, meibomian glands, teeth, footpads, eyelash primordia and invaginating mammary glands. Limb expression localizes to sheets of dermal cells on the apical and basal surfaces of the digits but, unlike FRAS1, is excluded from the apical ectodermal ridge. Usually expressed at higher level in dermal cells underlying the differentiating epithelial components, especially underlying the epidermis of the head, limbs, and eyelids. Expression in the eyelid dermis is apparent as early as 13 dpc. Postnatal expression in the skin is limited to the dermal papillae. In the kidney, it is expressed from 12.5 dpc in the mesenchyme surrounding the branching ureteric tree, with a strong expression in the more proximal regions of these tubules rather than at the proliferating and branching ends of the ureteric buds. In hair follicle, it is selectively expressed in the vibrissal hair primordia during development. Preferentially expressed in the whisker pad epithelia of 12.5 dpc embryos, in both the epithelial and mesenchymal cells of developing hair follicles. In the early stages of hair follicle development (i.e. stages 0-1), it is expressed in both hair placodes and dermal condensations. In stage 2, it is detected in dermal condensations and adjacent epithelia, but not in the upper region of the hair follicles. Expressed at the tip of developing hair follicles in the later stages (i.e. stages 3-5).

It is found in the secreted. Its subcellular location is the extracellular space. The protein resides in the extracellular matrix. It localises to the basement membrane. Functionally, extracellular matrix protein that plays a role in epidermal differentiation and is required for epidermal adhesion during embryonic development. This Mus musculus (Mouse) protein is FRAS1-related extracellular matrix protein 1 (Frem1).